Reading from the N-terminus, the 420-residue chain is uncharacterized protein (420 aa).

In terms of domain architecture, VWFA spans 43–215 (NLCLVLDHSG…HTFRQLFQRM (173 aa)). A disordered region spans residues 389 to 420 (LQSGEDLSEGDRKKTRMVSKTTLQPPSAPSEH).

This is an uncharacterized protein from Synechocystis sp. (strain ATCC 27184 / PCC 6803 / Kazusa).